Consider the following 327-residue polypeptide: MNPSNLEPGLANDSRLLVAAFYAFTPLDDERRETLLSSLPTLARNGSVLGSVLVAHEGVNGTISGPESAVDAVLDHLRTSFDLGDEHYARLEVKRSWAEKPVFRRFKARRKKEIVTIGVASVDPSTSVGTYVEAEHWNALVDDPDTLVIDTRNSYETAIGTFEGAIDPSTESFRDFPQWAESTLRPLIEQKSSKRIAMFCTGGIRCEKASSYLQQQGFGEVHHLRGGILKYLEQVPEAESRWQGECFVFDQRVALNHQLEPGEHSLCHACGLPVSAQQRELPSYIKGVQCLHCVDRFSDADRERFAMRQRQIDQRQIEQHKINRQQG.

The Rhodanese domain occupies 142–240 (DDPDTLVIDT…YLEQVPEAES (99 aa)). Residue C200 is the Cysteine persulfide intermediate of the active site.

Belongs to the TrhO family.

The enzyme catalyses uridine(34) in tRNA + AH2 + O2 = 5-hydroxyuridine(34) in tRNA + A + H2O. In terms of biological role, catalyzes oxygen-dependent 5-hydroxyuridine (ho5U) modification at position 34 in tRNAs. The chain is tRNA uridine(34) hydroxylase from Synechococcus sp. (strain CC9605).